We begin with the raw amino-acid sequence, 190 residues long: Putative serine carboxypeptidase-like 54 (190 aa).

Positions 1-25 (MATKTFSLPFLLIVCIFSQLSSTFG) are cleaved as a signal peptide. Asn58, Asn59, and Asn105 each carry an N-linked (GlcNAc...) asparagine glycan.

The protein belongs to the peptidase S10 family.

It localises to the secreted. This chain is Putative serine carboxypeptidase-like 54 (SCPL54), found in Arabidopsis thaliana (Mouse-ear cress).